The primary structure comprises 459 residues: MDQSKRYADLSLQEAALIAGGQHILCAYKMAPKDGLNYLEAAAHFAAESSTGTNVEVCTTDDFTRDVDALVYYVNEATEDMRIAYPLALFDRNITDGRFMLVSFLTLAVGNNQGMGDIKHAKMIDFYVPERVIQMFDGPAKDISDLWRILGRPVKDGGFIVGTIIKPKLGLRPEPFAQAAYQFWLGGDFIKNDEPQGNQVFSPIKKTLPLVYDALKRAQDETGQAKLFSMNITADDHFEMCARADFALETFGADADKLAFLVDGFVGGPGMVTTARRQYPNQYLHYHRGGHGMVTSPSSKRGYTALVLAKMSRLQGASGIHVGTMGHGKMEGAGDDRVMAYMIERDECQGPVYFQKWYGIKPTTPIVSGGMNALRLPGFFDNLGHGNIINTAGGGSYGHLDSPAAGAVSLRQAYECWKAGADPIEWAKEHREFARAFESFPQDADRLFAGWRDKLGVGA.

A substrate-binding site is contributed by N111. Catalysis depends on K166, which acts as the Proton acceptor. K168 is a substrate binding site. Mg(2+) contacts are provided by K191, D193, and E194. The residue at position 191 (K191) is an N6-carboxylysine. The Proton acceptor role is filled by H287. The substrate site is built by R288, H321, and S368.

It belongs to the RuBisCO large chain family. Type II subfamily. In terms of assembly, homodimer. It depends on Mg(2+) as a cofactor.

It catalyses the reaction 2 (2R)-3-phosphoglycerate + 2 H(+) = D-ribulose 1,5-bisphosphate + CO2 + H2O. It carries out the reaction D-ribulose 1,5-bisphosphate + O2 = 2-phosphoglycolate + (2R)-3-phosphoglycerate + 2 H(+). In terms of biological role, ruBisCO catalyzes two reactions: the carboxylation of D-ribulose 1,5-bisphosphate, the primary event in carbon dioxide fixation, as well as the oxidative fragmentation of the pentose substrate. Both reactions occur simultaneously and in competition at the same active site. The protein is Ribulose bisphosphate carboxylase of Albidiferax ferrireducens (strain ATCC BAA-621 / DSM 15236 / T118) (Rhodoferax ferrireducens).